Consider the following 95-residue polypeptide: Large ribosomal subunit protein uL23 (95 aa).

The protein belongs to the universal ribosomal protein uL23 family. In terms of assembly, part of the 50S ribosomal subunit. Contacts protein L29, and trigger factor when it is bound to the ribosome.

Its function is as follows. One of the early assembly proteins it binds 23S rRNA. One of the proteins that surrounds the polypeptide exit tunnel on the outside of the ribosome. Forms the main docking site for trigger factor binding to the ribosome. This Shouchella clausii (strain KSM-K16) (Alkalihalobacillus clausii) protein is Large ribosomal subunit protein uL23.